The sequence spans 191 residues: Repressor Rok (191 aa).

Residues 2–43 (FNEREALRLRLEQLNEAEVKVIREYQIERDKIYAKLRELDRN) are a coiled coil. The segment covering 75 to 96 (SYQPQSQQQSVQPQLQSISSLP) has biased composition (low complexity). Residues 75-116 (SYQPQSQQQSVQPQLQSISSLPAGIPDGTTRRRRGTARPGSK) are disordered. Residues 95-191 (LPAGIPDGTT…EIESAESANE (97 aa)) form a DNA-binding region.

It localises to the cytoplasm. The protein localises to the nucleoid. Its function is as follows. Repressor of comK, the master regulator of competence development. Overexpression seems to be lethal. Represses at least 20 genes that specify membrane-localized and secreted proteins, including some that encode products with antibiotic activity. Binds to many AT-rich sites in the chromosome, many of which are known or thought to derive from horizontal gene transfer; helps keep mobile element ICEBs1 quiescent in the genome. Binds to its own promoter and is thus probably autoregulatory. The chain is Repressor Rok from Bacillus subtilis (strain 168).